The chain runs to 825 residues: E3 ubiquitin-protein ligase ICP0 (825 aa).

Residues 1 to 10 are compositionally biased toward polar residues; sequence MEPRPGTSSR. The interval 1–121 is disordered; sequence MEPRPGTSSR…VGEEEAEAGG (121 aa). The span at 46–57 shows a compositional bias: acidic residues; sequence DSEEETEVGISD. The segment at 126–167 adopts an RING-type zinc-finger fold; it reads CAVCTDEIAPPLRCQSFPCLHPFCIPCMKTWIPLRNTCPLCN. 3 disordered regions span residues 221–312, 325–683, and 803–825; these read RSLS…GGGP, PPAA…PAPG, and RHPWSREQGAPAPAGDAPAGHGE. Acidic residues predominate over residues 242 to 251; it reads TDDEDDDLAD. Composition is skewed to low complexity over residues 273 to 283, 290 to 303, and 350 to 367; these read TRGTSQPAATR, PRSSSSGGAPLRAG, and PPARQPRAAQEPPIVISD. A compositionally biased stretch (pro residues) spans 368 to 379; that stretch reads SPPPSPRRPAGP. 2 stretches are compositionally biased toward low complexity: residues 380 to 394 and 402 to 439; these read GPLSFVSSSSAQVSS and PQSSGRAARPRAAVAPRVRSPPRAAAAPVVSASADAAG. Residues 456-468 show a composition bias toward polar residues; the sequence is RMTQAQTDTQAQS. Gly residues predominate over residues 479 to 491; the sequence is GSGGPGAEGGPGV. Composition is skewed to low complexity over residues 492 to 510 and 519 to 540; these read PRGTNTPGAAPHAAEGAAA and DSGPAASSSASSSAAPRSPLAP. The segment covering 552 to 563 has biased composition (basic and acidic residues); it reads RAPDSDSGDRGH. Residues 567 to 641 are compositionally biased toward low complexity; that stretch reads APASAGAAPP…GGSVASASGA (75 aa). A compositionally biased stretch (basic residues) spans 658–667; it reads GPRKCARKTR. Residues 811–825 are compositionally biased toward low complexity; the sequence is GAPAPAGDAPAGHGE.

In terms of processing, auto-ubiquitinated.

It carries out the reaction S-ubiquitinyl-[E2 ubiquitin-conjugating enzyme]-L-cysteine + [acceptor protein]-L-lysine = [E2 ubiquitin-conjugating enzyme]-L-cysteine + N(6)-ubiquitinyl-[acceptor protein]-L-lysine.. Evades nuclear antiviral defenses triggered by dsDNA viruses. Acts during the initial stages of lytic infection and the reactivation of latent viral genome. Prevents the antiviral effect of nuclear bodies by degrading host PML and SP100. Prevents antiviral response to viral DNA induced by IFI16 by degrading it. Additionally, inhibits host IRF3 nuclear signaling to prevent interferon production by the infected cells. This is E3 ubiquitin-protein ligase ICP0 (RL2) from Homo sapiens (Human).